The following is a 708-amino-acid chain: Tryptophan synthase (708 aa).

The interval 1 to 305 (MEGIKQTFQR…EADIDAQLAA (305 aa)) is tryptophan synthase alpha chain. Residues glutamate 49 and aspartate 60 each act as proton acceptor in the active site. The interval 306–708 (LHGTIPKRFG…GPKIGWDLRF (403 aa)) is tryptophan synthase beta chain. The residue at position 392 (lysine 392) is an N6-(pyridoxal phosphate)lysine.

The protein in the N-terminal section; belongs to the TrpA family. In the C-terminal section; belongs to the TrpB family. Requires pyridoxal 5'-phosphate as cofactor.

It carries out the reaction (1S,2R)-1-C-(indol-3-yl)glycerol 3-phosphate + L-serine = D-glyceraldehyde 3-phosphate + L-tryptophan + H2O. The protein operates within amino-acid biosynthesis; L-tryptophan biosynthesis; L-tryptophan from chorismate: step 5/5. The protein is Tryptophan synthase (trp-3) of Neurospora crassa (strain ATCC 24698 / 74-OR23-1A / CBS 708.71 / DSM 1257 / FGSC 987).